Reading from the N-terminus, the 258-residue chain is Trans-aconitate 2-methyltransferase (258 aa).

Belongs to the methyltransferase superfamily. Tam family.

The protein resides in the cytoplasm. It catalyses the reaction trans-aconitate + S-adenosyl-L-methionine = (E)-3-(methoxycarbonyl)pent-2-enedioate + S-adenosyl-L-homocysteine. Catalyzes the S-adenosylmethionine monomethyl esterification of trans-aconitate. The sequence is that of Trans-aconitate 2-methyltransferase from Acidovorax sp. (strain JS42).